The primary structure comprises 184 residues: uncharacterized protein (184 aa).

Residues 36 to 164 (LRHRATYIVV…TPDSLKALAL (129 aa)) enclose the Nudix hydrolase domain. Residues 73–95 (GGVVQADEQLLESARREAEEELG) carry the Nudix box motif. Residues glutamate 89 and glutamate 93 each coordinate Mg(2+).

This sequence belongs to the Nudix hydrolase family. Mg(2+) is required as a cofactor.

This is an uncharacterized protein from Salmonella typhi.